Here is a 1058-residue protein sequence, read N- to C-terminus: Ubiquitin-like modifier-activating enzyme 1 (1058 aa).

Residues 1–47 (MSSSPLSKKRRVSGPDPKPGSNCSPAQSVLPQVPSAPTNGMAKNGSE) form a disordered region. Residue Ser2 is modified to N-acetylserine. A phosphoserine mark is found at Ser4, Ser13, Ser21, Ser24, and Ser46. Residues 21 to 38 (SNCSPAQSVLPQVPSAPT) are compositionally biased toward polar residues. Tyr55 carries the phosphotyrosine modification. 2 repeat units span residues 63-199 (GHEA…GQLF) and 459-611 (GSDL…QVVI). Residues 63–611 (GHEAMKRLQT…GTKGNVQVVI (549 aa)) are 2 approximate repeats. ATP is bound by residues Ala478, Asp504, Arg515, Lys528, and 576–577 (DN). Residue Lys528 is modified to N6-succinyllysine. Catalysis depends on Cys632, which acts as the Glycyl thioester intermediate. Lys671 is modified (N6-acetyllysine). A Phosphothreonine modification is found at Thr800. Phosphoserine is present on residues Ser810, Ser816, Ser820, and Ser835. Position 980 is an N6-acetyllysine (Lys980).

This sequence belongs to the ubiquitin-activating E1 family. As to quaternary structure, monomer. Ubiquitous.

Its subcellular location is the cytoplasm. It is found in the mitochondrion. The protein resides in the nucleus. It catalyses the reaction ATP + ubiquitin + [E1 ubiquitin-activating enzyme]-L-cysteine = AMP + diphosphate + S-ubiquitinyl-[E1 ubiquitin-activating enzyme]-L-cysteine.. The protein operates within protein modification; protein ubiquitination. Catalyzes the first step in ubiquitin conjugation to mark cellular proteins for degradation through the ubiquitin-proteasome system. Activates ubiquitin by first adenylating its C-terminal glycine residue with ATP, and thereafter linking this residue to the side chain of a cysteine residue in E1, yielding a ubiquitin-E1 thioester and free AMP. Essential for the formation of radiation-induced foci, timely DNA repair and for response to replication stress. Promotes the recruitment of TP53BP1 and BRCA1 at DNA damage sites. The protein is Ubiquitin-like modifier-activating enzyme 1 (UBA1) of Oryctolagus cuniculus (Rabbit).